A 333-amino-acid chain; its full sequence is Mitochondrial 2-oxoglutarate/malate carrier protein (333 aa).

3 Solcar repeats span residues 29–127 (FRLI…LFER), 136–227 (PGFL…SKQF), and 236–325 (DNIL…MNKA). The next 6 helical transmembrane spans lie at 30-61 (RLIA…VQPL), 102-120 (GLSA…RLGI), 138-159 (FLLK…GTPA), 202-221 (GCIP…LASY), 241-259 (HFCA…SMPV), and 300-319 (GFTP…FIFL).

This sequence belongs to the mitochondrial carrier (TC 2.A.29) family. In terms of assembly, interacts with SMIM26.

The protein resides in the membrane. The enzyme catalyses (S)-malate(in) + 2-oxoglutarate(out) = (S)-malate(out) + 2-oxoglutarate(in). The catalysed reaction is malonate(in) + 2-oxoglutarate(out) = malonate(out) + 2-oxoglutarate(in). It carries out the reaction succinate(in) + 2-oxoglutarate(out) = succinate(out) + 2-oxoglutarate(in). It catalyses the reaction maleate(in) + 2-oxoglutarate(out) = maleate(out) + 2-oxoglutarate(in). The enzyme catalyses oxaloacetate(in) + 2-oxoglutarate(out) = oxaloacetate(out) + 2-oxoglutarate(in). In terms of biological role, catalyzes the transport of 2-oxoglutarate (alpha-oxoglutarate) across the inner mitochondrial membrane in an electroneutral exchange for malate. Can also exchange 2-oxoglutarate for other dicarboxylic acids such as malonate, succinate, maleate and oxaloacetate, although with lower affinity. Contributes to several metabolic processes, including the malate-aspartate shuttle, the oxoglutarate/isocitrate shuttle, in gluconeogenesis from lactate, and in nitrogen metabolism. Maintains mitochondrial fusion and fission events, and the organization and morphology of cristae. Involved in the regulation of apoptosis. Helps protect from cytotoxic-induced apoptosis by modulating glutathione levels in mitochondria. The chain is Mitochondrial 2-oxoglutarate/malate carrier protein (SLC25A11) from Sus scrofa (Pig).